The sequence spans 70 residues: Cytochrome c oxidase subunit 8B, mitochondrial (70 aa).

The transit peptide at 1-24 directs the protein to the mitochondrion; that stretch reads MLSLRPALRLLQAPLRCWAVPKAH. At 25 to 35 the chain is on the mitochondrial matrix side; sequence VSAKPAETPTS. The chain crosses the membrane as a helical span at residues 36 to 59; that stretch reads PAEQAVGLSFIFITFLGPAGWILS. Residues 60–70 are Mitochondrial intermembrane-facing; the sequence is HVENYKKRPRA.

The protein belongs to the cytochrome c oxidase VIII family. Component of the cytochrome c oxidase (complex IV, CIV), a multisubunit enzyme composed of 14 subunits. The complex is composed of a catalytic core of 3 subunits MT-CO1, MT-CO2 and MT-CO3, encoded in the mitochondrial DNA, and 11 supernumerary subunits COX4I, COX5A, COX5B, COX6A, COX6B, COX6C, COX7A, COX7B, COX7C, COX8 and NDUFA4, which are encoded in the nuclear genome. The complex exists as a monomer or a dimer and forms supercomplexes (SCs) in the inner mitochondrial membrane with NADH-ubiquinone oxidoreductase (complex I, CI) and ubiquinol-cytochrome c oxidoreductase (cytochrome b-c1 complex, complex III, CIII), resulting in different assemblies (supercomplex SCI(1)III(2)IV(1) and megacomplex MCI(2)III(2)IV(2)).

It is found in the mitochondrion inner membrane. The protein operates within energy metabolism; oxidative phosphorylation. In terms of biological role, component of the cytochrome c oxidase, the last enzyme in the mitochondrial electron transport chain which drives oxidative phosphorylation. The respiratory chain contains 3 multisubunit complexes succinate dehydrogenase (complex II, CII), ubiquinol-cytochrome c oxidoreductase (cytochrome b-c1 complex, complex III, CIII) and cytochrome c oxidase (complex IV, CIV), that cooperate to transfer electrons derived from NADH and succinate to molecular oxygen, creating an electrochemical gradient over the inner membrane that drives transmembrane transport and the ATP synthase. Cytochrome c oxidase is the component of the respiratory chain that catalyzes the reduction of oxygen to water. Electrons originating from reduced cytochrome c in the intermembrane space (IMS) are transferred via the dinuclear copper A center (CU(A)) of subunit 2 and heme A of subunit 1 to the active site in subunit 1, a binuclear center (BNC) formed by heme A3 and copper B (CU(B)). The BNC reduces molecular oxygen to 2 water molecules using 4 electrons from cytochrome c in the IMS and 4 protons from the mitochondrial matrix. This chain is Cytochrome c oxidase subunit 8B, mitochondrial (COX8B), found in Ateles belzebuth (White-bellied spider monkey).